We begin with the raw amino-acid sequence, 810 residues long: Eukaryotic translation initiation factor 3 subunit C (810 aa).

Residues 1 to 11 (MSRFFATNYNY) are compositionally biased toward polar residues. The interval 1 to 98 (MSRFFATNYN…DSDESDEEDG (98 aa)) is disordered. Residues 12–33 (DETSSSSEEDLLSSSEELLSSS) are compositionally biased toward low complexity. Over residues 34 to 58 (EEGELSDDSLFNDESESESDFDSDD) the composition is skewed to acidic residues. One can recognise a PCI domain in the interval 605 to 780 (YHQHINLDLV…TYIVIEKGDE (176 aa)).

It belongs to the eIF-3 subunit C family. As to quaternary structure, component of the eukaryotic translation initiation factor 3 (eIF-3) complex.

The protein resides in the cytoplasm. Component of the eukaryotic translation initiation factor 3 (eIF-3) complex, which is involved in protein synthesis of a specialized repertoire of mRNAs and, together with other initiation factors, stimulates binding of mRNA and methionyl-tRNAi to the 40S ribosome. The eIF-3 complex specifically targets and initiates translation of a subset of mRNAs involved in cell proliferation. This chain is Eukaryotic translation initiation factor 3 subunit C, found in Candida glabrata (strain ATCC 2001 / BCRC 20586 / JCM 3761 / NBRC 0622 / NRRL Y-65 / CBS 138) (Yeast).